A 275-amino-acid chain; its full sequence is NADPH-dependent 7-cyano-7-deazaguanine reductase (275 aa).

Residue 81–83 (IES) participates in substrate binding. Residue 83 to 84 (SK) participates in NADPH binding. The active-site Thioimide intermediate is the C181. The Proton donor role is filled by D188. 220–221 (HE) serves as a coordination point for substrate. Residue 249-250 (RG) participates in NADPH binding.

The protein belongs to the GTP cyclohydrolase I family. QueF type 2 subfamily. Homodimer.

The protein localises to the cytoplasm. It carries out the reaction 7-aminomethyl-7-carbaguanine + 2 NADP(+) = 7-cyano-7-deazaguanine + 2 NADPH + 3 H(+). The protein operates within tRNA modification; tRNA-queuosine biosynthesis. Functionally, catalyzes the NADPH-dependent reduction of 7-cyano-7-deazaguanine (preQ0) to 7-aminomethyl-7-deazaguanine (preQ1). In Xylella fastidiosa (strain M12), this protein is NADPH-dependent 7-cyano-7-deazaguanine reductase.